A 443-amino-acid chain; its full sequence is MPFIPNTDADRATMLQAVGASTFDDLISNIPEKVRFKGALNLPEALSEMEVLEELNALANANQDTQKVTSFLGGGAYDHFVPSAIGAIISRSEFYTAYTPYQAEVSQGTLQAMYEFQTMVARLTGMDVANASMYDGATALAEAMLLSVAHKNRKEVVLAGKINPNAVAIMQTYGHGQEIHIRQSALENGGADLASVRELVSDKTAAMIVQHPNFFGCLEDVHELQKIAAENNALFIVSADPISLGILEAPGNYGADIVVGEGQGLGNTQSFGGPYLGLFAAKSQLLRKIPGRLSGMTVDKDGNQGFILTLQTREQHIRREKATSNICTNQALNALCACIYMSMMGKEGLTQVASLSIQKAHYLANEIQKLDGFKLKFSRPFFKEFAIELPIPASQAIAKLLEKKIHAGVDLKMAEENGLLIAVTEKRSKAEMNSFVEALKELC.

It belongs to the GcvP family. N-terminal subunit subfamily. The glycine cleavage system is composed of four proteins: P, T, L and H. In this organism, the P 'protein' is a heterodimer of two subunits.

It catalyses the reaction N(6)-[(R)-lipoyl]-L-lysyl-[glycine-cleavage complex H protein] + glycine + H(+) = N(6)-[(R)-S(8)-aminomethyldihydrolipoyl]-L-lysyl-[glycine-cleavage complex H protein] + CO2. Its function is as follows. The glycine cleavage system catalyzes the degradation of glycine. The P protein binds the alpha-amino group of glycine through its pyridoxal phosphate cofactor; CO(2) is released and the remaining methylamine moiety is then transferred to the lipoamide cofactor of the H protein. The sequence is that of Probable glycine dehydrogenase (decarboxylating) subunit 1 from Chloroherpeton thalassium (strain ATCC 35110 / GB-78).